Here is a 251-residue protein sequence, read N- to C-terminus: E3 ubiquitin-protein ligase Os06g0535400 (251 aa).

Helical transmembrane passes span 28-48, 102-122, and 127-147; these read VVAA…YCFA, LANR…IVVF, and ADVV…VWLS. Residues 185 to 227 form an RING-type; atypical zinc finger; that stretch reads CCVCLAGMREAQALRDLPRCGHRFHAKCIGKWLTAHPTCPVCR.

The protein localises to the membrane. The enzyme catalyses S-ubiquitinyl-[E2 ubiquitin-conjugating enzyme]-L-cysteine + [acceptor protein]-L-lysine = [E2 ubiquitin-conjugating enzyme]-L-cysteine + N(6)-ubiquitinyl-[acceptor protein]-L-lysine.. The protein operates within protein modification; protein ubiquitination. In terms of biological role, possesses E3 ubiquitin-protein ligase in vitro. This chain is E3 ubiquitin-protein ligase Os06g0535400, found in Oryza sativa subsp. japonica (Rice).